A 3020-amino-acid polypeptide reads, in one-letter code: Protein furry homolog (3020 aa).

The residue at position 213 (Tyr213) is a Phosphotyrosine. 3 disordered regions span residues 1378–1404, 1529–1554, and 1746–1773; these read GSSPSSPEDEVKDREGEVTASHGLKGN, ASGTTSSSNTVVAGQDSFPDPEESKI, and SSPVPDSGLNSSSTSSSISLGGSSGNLP. Phosphoserine occurs at positions 1382 and 1383. The span at 1752–1772 shows a compositional bias: low complexity; it reads SGLNSSSTSSSISLGGSSGNL. 2 positions are modified to phosphoserine: Ser1936 and Ser1940. A compositionally biased stretch (low complexity) spans 1937 to 1956; the sequence is RSSSPDLSSSSKLTASRKST. 2 disordered regions span residues 1937 to 2042 and 2355 to 2384; these read RSSS…PSHV and LQNSSGRDGKPRAMAVTRSASSTSSGSNSN. Gly residues predominate over residues 1966 to 1976; sequence PGSGGGGGGSG. A compositionally biased stretch (polar residues) spans 2016-2042; sequence ACTQQGLSSKTRSNSSLKESLTDPSHV. Residues 2369–2384 show a composition bias toward low complexity; sequence AVTRSASSTSSGSNSN. Ser2427 and Ser2428 each carry phosphoserine. The tract at residues 2439–2458 is disordered; sequence TSLVSSEDGPREQENMDDTN. Ser2495 carries the post-translational modification Phosphoserine. Positions 2508–2535 are disordered; it reads EERQLSRSTPSLNKMSHEDSDESSEEDL. Residue Thr2516 is modified to Phosphothreonine; by CDK1. Positions 2526 to 2535 are enriched in acidic residues; that stretch reads DSDESSEEDL. Ser2815 is subject to Phosphoserine.

It belongs to the furry protein family. As to quaternary structure, when phosphorylated by CDK1, interacts with PLK1; this interaction occurs in mitotic cells, but not in interphase cells, and leads to further FRY phosphorylation by PLK1. In terms of processing, phosphorylated by AURKA, CDK1 and PLK1.

Its subcellular location is the cytoplasm. The protein resides in the cytoskeleton. The protein localises to the microtubule organizing center. It is found in the centrosome. It localises to the spindle pole. In terms of biological role, plays a crucial role in the structural integrity of mitotic centrosomes and in the maintenance of spindle bipolarity by promoting PLK1 activity at the spindle poles in early mitosis. May function as a scaffold promoting the interaction between AURKA and PLK1, thereby enhancing AURKA-mediated PLK1 phosphorylation. In Mus musculus (Mouse), this protein is Protein furry homolog (Fry).